Reading from the N-terminus, the 183-residue chain is Ribulose bisphosphate carboxylase small subunit, chloroplastic 1 (183 aa).

The N-terminal 58 residues, 1-58, are a transit peptide targeting the chloroplast; the sequence is MASSMLSNAAMATTAATAGAQASMVAPFNGLKSFATFPITKKSSNDFSSLPSNGGRVQ.

Belongs to the RuBisCO small chain family. As to quaternary structure, heterohexadecamer of 8 large and 8 small subunits.

It localises to the plastid. The protein resides in the chloroplast. Its function is as follows. RuBisCO catalyzes two reactions: the carboxylation of D-ribulose 1,5-bisphosphate, the primary event in carbon dioxide fixation, as well as the oxidative fragmentation of the pentose substrate. Both reactions occur simultaneously and in competition at the same active site. Although the small subunit is not catalytic it is essential for maximal activity. The protein is Ribulose bisphosphate carboxylase small subunit, chloroplastic 1 of Amaranthus hypochondriacus (Prince-of-Wales feather).